The sequence spans 185 residues: Elongation factor P (185 aa).

Belongs to the elongation factor P family.

It is found in the cytoplasm. The protein operates within protein biosynthesis; polypeptide chain elongation. Its function is as follows. Involved in peptide bond synthesis. Stimulates efficient translation and peptide-bond synthesis on native or reconstituted 70S ribosomes in vitro. Probably functions indirectly by altering the affinity of the ribosome for aminoacyl-tRNA, thus increasing their reactivity as acceptors for peptidyl transferase. This is Elongation factor P from Bacillus mycoides (strain KBAB4) (Bacillus weihenstephanensis).